The primary structure comprises 397 residues: Acetate kinase 2 (397 aa).

Position 10 (Asn10) interacts with Mg(2+). Residue Lys17 coordinates ATP. Arg90 contributes to the substrate binding site. Residue Asp147 is the Proton donor/acceptor of the active site. ATP contacts are provided by residues 207–211 (HLGNG), 281–283 (DAR), and 329–333 (GIGEN). Residue Glu385 participates in Mg(2+) binding.

Belongs to the acetokinase family. As to quaternary structure, homodimer. Requires Mg(2+) as cofactor. It depends on Mn(2+) as a cofactor.

The protein resides in the cytoplasm. It catalyses the reaction acetate + ATP = acetyl phosphate + ADP. It participates in metabolic intermediate biosynthesis; acetyl-CoA biosynthesis; acetyl-CoA from acetate: step 1/2. Catalyzes the formation of acetyl phosphate from acetate and ATP. Can also catalyze the reverse reaction. This Aliivibrio fischeri (strain ATCC 700601 / ES114) (Vibrio fischeri) protein is Acetate kinase 2.